A 610-amino-acid polypeptide reads, in one-letter code: Elongation factor 4 (610 aa).

A tr-type G domain is found at Ser13–Lys195. GTP is bound by residues Asp25–Thr30 and Asn142–Asp145.

Belongs to the TRAFAC class translation factor GTPase superfamily. Classic translation factor GTPase family. LepA subfamily.

The protein resides in the cell inner membrane. The catalysed reaction is GTP + H2O = GDP + phosphate + H(+). Required for accurate and efficient protein synthesis under certain stress conditions. May act as a fidelity factor of the translation reaction, by catalyzing a one-codon backward translocation of tRNAs on improperly translocated ribosomes. Back-translocation proceeds from a post-translocation (POST) complex to a pre-translocation (PRE) complex, thus giving elongation factor G a second chance to translocate the tRNAs correctly. Binds to ribosomes in a GTP-dependent manner. This is Elongation factor 4 from Rhizobium etli (strain ATCC 51251 / DSM 11541 / JCM 21823 / NBRC 15573 / CFN 42).